Consider the following 362-residue polypeptide: Adenosine deaminase (362 aa).

Zn(2+)-binding residues include H19 and H21. Residues H21, D23, and G181 each coordinate substrate. Zn(2+) is bound at residue H208. The active-site Proton donor is the E211. Residue D300 participates in Zn(2+) binding.

This sequence belongs to the metallo-dependent hydrolases superfamily. Adenosine and AMP deaminases family. Adenosine deaminase subfamily. Zn(2+) is required as a cofactor.

It catalyses the reaction adenosine + H2O + H(+) = inosine + NH4(+). It carries out the reaction 2'-deoxyadenosine + H2O + H(+) = 2'-deoxyinosine + NH4(+). Functionally, catalyzes the hydrolytic deamination of adenosine and 2-deoxyadenosine. The chain is Adenosine deaminase from Mycobacterium sp. (strain MCS).